The primary structure comprises 617 residues: Probable Xaa-Pro aminopeptidase P (617 aa).

Mn(2+)-binding residues include D414, D425, E523, and E537.

The protein belongs to the peptidase M24B family. Requires Mn(2+) as cofactor.

The enzyme catalyses Release of any N-terminal amino acid, including proline, that is linked to proline, even from a dipeptide or tripeptide.. Catalyzes the removal of a penultimate prolyl residue from the N-termini of peptides. This Ajellomyces dermatitidis (strain ER-3 / ATCC MYA-2586) (Blastomyces dermatitidis) protein is Probable Xaa-Pro aminopeptidase P (AMPP).